A 167-amino-acid polypeptide reads, in one-letter code: Peptide deformylase (167 aa).

The Fe cation site is built by C91 and H133. E134 is a catalytic residue. Residue H137 coordinates Fe cation.

This sequence belongs to the polypeptide deformylase family. Fe(2+) is required as a cofactor.

It carries out the reaction N-terminal N-formyl-L-methionyl-[peptide] + H2O = N-terminal L-methionyl-[peptide] + formate. Functionally, removes the formyl group from the N-terminal Met of newly synthesized proteins. Requires at least a dipeptide for an efficient rate of reaction. N-terminal L-methionine is a prerequisite for activity but the enzyme has broad specificity at other positions. This Buchnera aphidicola subsp. Schizaphis graminum (strain Sg) protein is Peptide deformylase.